Reading from the N-terminus, the 137-residue chain is Cellular retinoic acid-binding protein 1 (137 aa).

A Nuclear localization signal motif is present at residues 21-31 (KALGVNAMLRK). 132–134 (RIY) serves as a coordination point for all-trans-retinoate.

This sequence belongs to the calycin superfamily. Fatty-acid binding protein (FABP) family.

The protein resides in the cytoplasm. Its function is as follows. Cytosolic CRABPs may regulate the access of retinoic acid to the nuclear retinoic acid receptors. In Hippocampus comes (Tiger tail seahorse), this protein is Cellular retinoic acid-binding protein 1 (crabp1).